Consider the following 535-residue polypeptide: 4-hydroxy-3-methylbut-2-enyl diphosphate reductase, apicoplast (535 aa).

Cys231 is a [4Fe-4S] cluster binding site. Positions 260 and 293 each coordinate (2E)-4-hydroxy-3-methylbut-2-enyl diphosphate. Positions 260 and 293 each coordinate dimethylallyl diphosphate. Positions 260 and 293 each coordinate isopentenyl diphosphate. Cys315 contributes to the [4Fe-4S] cluster binding site. Residue His343 participates in (2E)-4-hydroxy-3-methylbut-2-enyl diphosphate binding. His343 contacts dimethylallyl diphosphate. Position 343 (His343) interacts with isopentenyl diphosphate. The active-site Proton donor is Glu345. Residue Thr383 participates in (2E)-4-hydroxy-3-methylbut-2-enyl diphosphate binding. Cys413 serves as a coordination point for [4Fe-4S] cluster. 4 residues coordinate (2E)-4-hydroxy-3-methylbut-2-enyl diphosphate: Ser441, Ser442, Asn443, and Ser485. Ser441, Ser442, Asn443, and Ser485 together coordinate dimethylallyl diphosphate. 4 residues coordinate isopentenyl diphosphate: Ser441, Ser442, Asn443, and Ser485.

The protein belongs to the IspH family. As to quaternary structure, interacts with Fd/ferredoxin. The cofactor is [4Fe-4S] cluster.

It is found in the plastid. The protein resides in the apicoplast. The catalysed reaction is dimethylallyl diphosphate + 2 oxidized [2Fe-2S]-[ferredoxin] + H2O = (2E)-4-hydroxy-3-methylbut-2-enyl diphosphate + 2 reduced [2Fe-2S]-[ferredoxin] + 2 H(+). It carries out the reaction isopentenyl diphosphate + 2 oxidized [2Fe-2S]-[ferredoxin] + H2O = (2E)-4-hydroxy-3-methylbut-2-enyl diphosphate + 2 reduced [2Fe-2S]-[ferredoxin] + 2 H(+). It functions in the pathway isoprenoid biosynthesis; dimethylallyl diphosphate biosynthesis; dimethylallyl diphosphate from (2E)-4-hydroxy-3-methylbutenyl diphosphate: step 1/1. It participates in isoprenoid biosynthesis; isopentenyl diphosphate biosynthesis via DXP pathway; isopentenyl diphosphate from 1-deoxy-D-xylulose 5-phosphate: step 6/6. Catalyzes the conversion of 1-hydroxy-2-methyl-2-(E)-butenyl 4-diphosphate (HMBPP) into a mixture of isopentenyl diphosphate (IPP) and dimethylallyl diphosphate (DMAPP). Acts in the terminal step of the DOXP/MEP pathway for isoprenoid precursor biosynthesis. The protein is 4-hydroxy-3-methylbut-2-enyl diphosphate reductase, apicoplast of Plasmodium falciparum (isolate 3D7).